The sequence spans 347 residues: RNA 3'-terminal phosphate cyclase (347 aa).

ATP contacts are provided by residues Gln109 and 290–294; that span reads YLADQ. His315 (tele-AMP-histidine intermediate) is an active-site residue.

Belongs to the RNA 3'-terminal cyclase family. Type 1 subfamily.

It localises to the cytoplasm. The enzyme catalyses a 3'-end 3'-phospho-ribonucleotide-RNA + ATP = a 3'-end 2',3'-cyclophospho-ribonucleotide-RNA + AMP + diphosphate. Its function is as follows. Catalyzes the conversion of 3'-phosphate to a 2',3'-cyclic phosphodiester at the end of RNA. The mechanism of action of the enzyme occurs in 3 steps: (A) adenylation of the enzyme by ATP; (B) transfer of adenylate to an RNA-N3'P to produce RNA-N3'PP5'A; (C) and attack of the adjacent 2'-hydroxyl on the 3'-phosphorus in the diester linkage to produce the cyclic end product. The biological role of this enzyme is unknown but it is likely to function in some aspects of cellular RNA processing. The sequence is that of RNA 3'-terminal phosphate cyclase from Ralstonia nicotianae (strain ATCC BAA-1114 / GMI1000) (Ralstonia solanacearum).